Here is a 26-residue protein sequence, read N- to C-terminus: Dermaseptin-J4 (26 aa).

Val26 bears the Valine amide mark.

Expressed by the skin glands.

It localises to the secreted. Functionally, has antimicrobial activity. The protein is Dermaseptin-J4 of Phasmahyla jandaia (Jandaia leaf frog).